The chain runs to 410 residues: MSYDRVKDFDLPELAVHLQPHGAVMIDRKSMFYFRLSGRGAQLAFLLSKNKNLHKTARIWEIMKKEEMSADQLKEELSAHPFTEAWTEGLLDQPLHVSGSLDSYLPISCTLQLTNACNLSCSFCYASSGKPYPEELSSEQWILVMQKLAAHGVADITLTGGEAKLIKGFKELVVVASSLFTNVNVFSNGLNWRDEEVELLSHLGNVSVQISIDGMDNTHDQLRGRKGGFKESMNTIKKLSEANIPVIVAMTINESNADEVSDVVEQCANAGAFIFRAGKTLSVGRATEGFKALDIDFEEMVQIQLREARHKWGDRLNIIDWEHEESSFTTDFCTPGYLAWYIRADGYVTPCQLEDLPLGHILEDSMADIGSPARLLQLKCEAKNCKCIGKIELSEPDLPFQKEVKAGIQE.

The region spanning serine 103–aspartate 314 is the Radical SAM core domain. 6 residues coordinate [4Fe-4S] cluster: cysteine 117, cysteine 121, cysteine 124, cysteine 380, cysteine 385, and cysteine 387.

It belongs to the radical SAM superfamily. The cofactor is [4Fe-4S] cluster.

Its subcellular location is the cytoplasm. In terms of biological role, catalyzes the formation of the thioether bond required for production of the sporulation killing factor (SKF) from SkfA. Forms the cysteine-methionine thioether bond found in SKF; the acceptor amino acid can be hydrophobic, aromatic or a small hydrophilic amino acid but not a larger hydrophilic amino acid, i.e. Met=Ala, Phe, Leu, Tyr&gt;Asn, Ser&gt;&gt;Gln, Glu, Lys. The relative position of Cys and Met in the substrate cannot be inverted, in vitro the thioether bond cannot be made in the absence of the SkfA propeptide, suggesting this is the first reaction in SKF maturation. In vitro, in the absence of a second substrate, cleaves S-adenosyl-L-methionine into Met and 5'-dA. In Bacillus subtilis (strain 168), this protein is Sporulation killing factor maturation protein SkfB.